The sequence spans 124 residues: Fluoride-specific ion channel FluC (124 aa).

4 consecutive transmembrane segments (helical) span residues 1-21, 36-56, 70-90, and 100-120; these read MLNT…RYGV, TMII…WFVV, TGIL…FLLI, and LYVI…FAII. Na(+) is bound by residues Gly74 and Thr77.

It belongs to the fluoride channel Fluc/FEX (TC 1.A.43) family.

The protein localises to the cell inner membrane. It carries out the reaction fluoride(in) = fluoride(out). Na(+) is not transported, but it plays an essential structural role and its presence is essential for fluoride channel function. Its function is as follows. Fluoride-specific ion channel. Important for reducing fluoride concentration in the cell, thus reducing its toxicity. The polypeptide is Fluoride-specific ion channel FluC (Methylobacterium sp. (strain 4-46)).